A 242-amino-acid chain; its full sequence is Proteasome subunit alpha (242 aa).

It belongs to the peptidase T1A family. In terms of assembly, the 20S proteasome core is composed of 14 alpha and 14 beta subunits that assemble into four stacked heptameric rings, resulting in a barrel-shaped structure. The two inner rings, each composed of seven catalytic beta subunits, are sandwiched by two outer rings, each composed of seven alpha subunits. The catalytic chamber with the active sites is on the inside of the barrel. Has a gated structure, the ends of the cylinder being occluded by the N-termini of the alpha-subunits. Is capped at one or both ends by the proteasome regulatory ATPase, PAN.

The protein localises to the cytoplasm. The formation of the proteasomal ATPase PAN-20S proteasome complex, via the docking of the C-termini of PAN into the intersubunit pockets in the alpha-rings, triggers opening of the gate for substrate entry. Interconversion between the open-gate and close-gate conformations leads to a dynamic regulation of the 20S proteasome proteolysis activity. Functionally, component of the proteasome core, a large protease complex with broad specificity involved in protein degradation. The chain is Proteasome subunit alpha from Sulfurisphaera tokodaii (strain DSM 16993 / JCM 10545 / NBRC 100140 / 7) (Sulfolobus tokodaii).